The sequence spans 142 residues: MDLRLTYVFIVAILKGVLCEVKLEESGGGLVQPGMSVKLSCATSGFTFSDYWMEWVRQAPGKGLEWVAEIRNKANNYVAYYGKSLKGRFTLSRDDSKSIVYLQMNNIRSEDTGIYYCSRGYGGYSENWFVYWGQGTLVTVSS.

The N-terminal stretch at 1–19 (MDLRLTYVFIVAILKGVLC) is a signal peptide. The Ig-like domain maps to 20–133 (EVKLEESGGG…YSENWFVYWG (114 aa)).

The polypeptide is Ig heavy chain V region IR2 (Rattus norvegicus (Rat)).